The chain runs to 419 residues: Gamma-glutamyl phosphate reductase (419 aa).

It belongs to the gamma-glutamyl phosphate reductase family.

Its subcellular location is the cytoplasm. The enzyme catalyses L-glutamate 5-semialdehyde + phosphate + NADP(+) = L-glutamyl 5-phosphate + NADPH + H(+). Its pathway is amino-acid biosynthesis; L-proline biosynthesis; L-glutamate 5-semialdehyde from L-glutamate: step 2/2. In terms of biological role, catalyzes the NADPH-dependent reduction of L-glutamate 5-phosphate into L-glutamate 5-semialdehyde and phosphate. The product spontaneously undergoes cyclization to form 1-pyrroline-5-carboxylate. The protein is Gamma-glutamyl phosphate reductase of Yersinia enterocolitica serotype O:8 / biotype 1B (strain NCTC 13174 / 8081).